We begin with the raw amino-acid sequence, 273 residues long: Large ribosomal subunit protein uL29m (273 aa).

The span at Pro-247–Glu-258 shows a compositional bias: basic and acidic residues. Positions Pro-247–Asn-273 are disordered.

Belongs to the universal ribosomal protein uL29 family. Component of the mitochondrial large ribosomal subunit. Mature mitochondrial ribosomes consist of a small (37S) and a large (54S) subunit. The 37S subunit contains at least 33 different proteins and 1 molecule of RNA (15S). The 54S subunit contains at least 45 different proteins and 1 molecule of RNA (21S).

The protein localises to the mitochondrion. In Aspergillus niger (strain ATCC MYA-4892 / CBS 513.88 / FGSC A1513), this protein is Large ribosomal subunit protein uL29m (mrpl4).